Reading from the N-terminus, the 256-residue chain is Acetyl-coenzyme A carboxylase carboxyl transferase subunit alpha (256 aa).

In terms of domain architecture, CoA carboxyltransferase C-terminal spans 1-236; sequence MTDVARILKE…KEHLKTEINQ (236 aa).

The protein belongs to the AccA family. In terms of assembly, acetyl-CoA carboxylase is a heterohexamer composed of biotin carboxyl carrier protein (AccB), biotin carboxylase (AccC) and two subunits each of ACCase subunit alpha (AccA) and ACCase subunit beta (AccD).

Its subcellular location is the cytoplasm. It catalyses the reaction N(6)-carboxybiotinyl-L-lysyl-[protein] + acetyl-CoA = N(6)-biotinyl-L-lysyl-[protein] + malonyl-CoA. It functions in the pathway lipid metabolism; malonyl-CoA biosynthesis; malonyl-CoA from acetyl-CoA: step 1/1. Its function is as follows. Component of the acetyl coenzyme A carboxylase (ACC) complex. First, biotin carboxylase catalyzes the carboxylation of biotin on its carrier protein (BCCP) and then the CO(2) group is transferred by the carboxyltransferase to acetyl-CoA to form malonyl-CoA. This chain is Acetyl-coenzyme A carboxylase carboxyl transferase subunit alpha, found in Streptococcus uberis (strain ATCC BAA-854 / 0140J).